Consider the following 151-residue polypeptide: S-ribosylhomocysteine lyase (151 aa).

Fe cation is bound by residues histidine 54, histidine 58, and cysteine 121.

This sequence belongs to the LuxS family. Homodimer. It depends on Fe cation as a cofactor.

It catalyses the reaction S-(5-deoxy-D-ribos-5-yl)-L-homocysteine = (S)-4,5-dihydroxypentane-2,3-dione + L-homocysteine. Its function is as follows. Involved in the synthesis of autoinducer 2 (AI-2) which is secreted by bacteria and is used to communicate both the cell density and the metabolic potential of the environment. The regulation of gene expression in response to changes in cell density is called quorum sensing. Catalyzes the transformation of S-ribosylhomocysteine (RHC) to homocysteine (HC) and 4,5-dihydroxy-2,3-pentadione (DPD). The protein is S-ribosylhomocysteine lyase of Clostridium botulinum (strain Alaska E43 / Type E3).